The following is a 291-amino-acid chain: UPF0173 metal-dependent hydrolase Rmet_5695 (291 aa).

The protein belongs to the UPF0173 family.

The sequence is that of UPF0173 metal-dependent hydrolase Rmet_5695 from Cupriavidus metallidurans (strain ATCC 43123 / DSM 2839 / NBRC 102507 / CH34) (Ralstonia metallidurans).